The following is a 268-amino-acid chain: Tryptophan synthase alpha chain (268 aa).

Active-site proton acceptor residues include Glu-49 and Asp-60.

This sequence belongs to the TrpA family. Tetramer of two alpha and two beta chains.

The enzyme catalyses (1S,2R)-1-C-(indol-3-yl)glycerol 3-phosphate + L-serine = D-glyceraldehyde 3-phosphate + L-tryptophan + H2O. It participates in amino-acid biosynthesis; L-tryptophan biosynthesis; L-tryptophan from chorismate: step 5/5. In terms of biological role, the alpha subunit is responsible for the aldol cleavage of indoleglycerol phosphate to indole and glyceraldehyde 3-phosphate. The protein is Tryptophan synthase alpha chain of Shigella sonnei (strain Ss046).